The chain runs to 111 residues: Probable 4-amino-4-deoxy-L-arabinose-phosphoundecaprenol flippase subunit ArnE (111 aa).

Topologically, residues 1-35 (MIWLTLVFASLLSVAGQLCQKQATCFVAISKRRKH) are cytoplasmic. A helical membrane pass occupies residues 36 to 56 (IVLWLGLALACLGLAMVLWLL). Residues 40-109 (LGLALACLGL…IIGGIVILGS (70 aa)) enclose the EamA domain. At 57-60 (VLQN) the chain is on the periplasmic side. The chain crosses the membrane as a helical span at residues 61 to 81 (VPVGIAYPMLSLNFVWVTLAA). At 82-87 (VKLWHE) the chain is on the cytoplasmic side. Residues 88–108 (PVSPRHWCGVAFIIGGIVILG) form a helical membrane-spanning segment. Residues 109–111 (STV) lie on the Periplasmic side of the membrane.

This sequence belongs to the ArnE family. In terms of assembly, heterodimer of ArnE and ArnF.

Its subcellular location is the cell inner membrane. The protein operates within bacterial outer membrane biogenesis; lipopolysaccharide biosynthesis. Functionally, translocates 4-amino-4-deoxy-L-arabinose-phosphoundecaprenol (alpha-L-Ara4N-phosphoundecaprenol) from the cytoplasmic to the periplasmic side of the inner membrane. The sequence is that of Probable 4-amino-4-deoxy-L-arabinose-phosphoundecaprenol flippase subunit ArnE from Escherichia coli O157:H7.